A 528-amino-acid polypeptide reads, in one-letter code: Importin subunit alpha-2 (528 aa).

The span at 1-15 (MADDSASPSPSSASP) shows a compositional bias: low complexity. A disordered region spans residues 1 to 36 (MADDSASPSPSSASPLQHHREALKSSVRNTAASRRR). ARM repeat units follow at residues 125–165 (VPLV…NIAA), 167–206 (EPEE…NVAG), 209–248 (AELR…NLIK), 253–292 (KAAN…YLSA), 294–335 (SDRG…NLIA), 338–383 (DYMV…NIAA), 386–425 (FEHK…NLCV), and 438–477 (VEHL…LVMR).

Belongs to the importin alpha family. As to quaternary structure, forms a complex with importin subunit beta-1. The whole complex, most stable and composed of importin alpha, importin beta and NLS substrate, is referred to as PTAC or pore targeting complex. In terms of tissue distribution, expressed in root, callus, and etiolated leaf. Low expression in green leaf.

It localises to the cytoplasm. The protein resides in the perinuclear region. Functionally, binds specifically and directly to substrates containing either a simple or bipartite NLS motif. Promotes docking of import substrates to the nuclear envelope. This chain is Importin subunit alpha-2, found in Oryza sativa subsp. japonica (Rice).